Consider the following 159-residue polypeptide: Transmembrane protein 88 (159 aa).

2 helical membrane passes run 43–63 (LLLL…MLGF) and 88–108 (FTAL…LALA). The segment at 137 to 159 (PQPRQIRASPGSQAVPTSGKVWV) is disordered.

Belongs to the TMEM88 family. Interacts (via C-terminus) with DVL1.

The protein localises to the cell membrane. Functionally, inhibits the Wnt/beta-catenin signaling pathway. Crucial for heart development and acts downstream of GATA factors in the pre-cardiac mesoderm to specify lineage commitment of cardiomyocyte development. This is Transmembrane protein 88 (TMEM88) from Homo sapiens (Human).